A 37-amino-acid polypeptide reads, in one-letter code: Large ribosomal subunit protein bL36 (37 aa).

It belongs to the bacterial ribosomal protein bL36 family.

In Staphylococcus saprophyticus subsp. saprophyticus (strain ATCC 15305 / DSM 20229 / NCIMB 8711 / NCTC 7292 / S-41), this protein is Large ribosomal subunit protein bL36.